Reading from the N-terminus, the 244-residue chain is Mediator of RNA polymerase II transcription subunit 19 (244 aa).

Disordered stretches follow at residues 1 to 67 (MENF…PFYL) and 171 to 244 (PKKK…SSLR). Over residues 26-38 (GKPPPPPPPPPGG) the composition is skewed to pro residues. Residues 44–55 (PPSTATSAPAGA) show a composition bias toward low complexity. The span at 171-182 (PKKKNKHKHKQS) shows a compositional bias: basic residues. S194 is modified (phosphoserine). Positions 212-224 (KRKKKEKKKKKNR) are enriched in basic residues. A Phosphoserine modification is found at S226. Residues 234–244 (SSQASSSSSLR) show a composition bias toward low complexity.

This sequence belongs to the Mediator complex subunit 19 family. Component of the Mediator complex, which is composed of MED1, MED4, MED6, MED7, MED8, MED9, MED10, MED11, MED12, MED13, MED13L, MED14, MED15, MED16, MED17, MED18, MED19, MED20, MED21, MED22, MED23, MED24, MED25, MED26, MED27, MED29, MED30, MED31, CCNC, CDK8 and CDC2L6/CDK11. The MED12, MED13, CCNC and CDK8 subunits form a distinct module termed the CDK8 module. Mediator containing the CDK8 module is less active than Mediator lacking this module in supporting transcriptional activation. Individual preparations of the Mediator complex lacking one or more distinct subunits have been variously termed ARC, CRSP, DRIP, PC2, SMCC and TRAP.

It localises to the nucleus. Its function is as follows. Component of the Mediator complex, a coactivator involved in the regulated transcription of nearly all RNA polymerase II-dependent genes. Mediator functions as a bridge to convey information from gene-specific regulatory proteins to the basal RNA polymerase II transcription machinery. Mediator is recruited to promoters by direct interactions with regulatory proteins and serves as a scaffold for the assembly of a functional preinitiation complex with RNA polymerase II and the general transcription factors. This is Mediator of RNA polymerase II transcription subunit 19 (Med19) from Mus musculus (Mouse).